A 373-amino-acid polypeptide reads, in one-letter code: Queuine tRNA-ribosyltransferase (373 aa).

The Proton acceptor role is filled by Asp90. Substrate is bound by residues 90-94, Asp144, Gln193, and Gly220; that span reads DSGGF. The RNA binding stretch occupies residues 251-257; the sequence is GVGTPED. Asp270 functions as the Nucleophile in the catalytic mechanism. The RNA binding; important for wobble base 34 recognition stretch occupies residues 275–279; sequence TRNAR. The Zn(2+) site is built by Cys308, Cys310, Cys313, and His339.

Belongs to the queuine tRNA-ribosyltransferase family. In terms of assembly, homodimer. Within each dimer, one monomer is responsible for RNA recognition and catalysis, while the other monomer binds to the replacement base PreQ1. It depends on Zn(2+) as a cofactor.

It carries out the reaction 7-aminomethyl-7-carbaguanine + guanosine(34) in tRNA = 7-aminomethyl-7-carbaguanosine(34) in tRNA + guanine. It functions in the pathway tRNA modification; tRNA-queuosine biosynthesis. Functionally, catalyzes the base-exchange of a guanine (G) residue with the queuine precursor 7-aminomethyl-7-deazaguanine (PreQ1) at position 34 (anticodon wobble position) in tRNAs with GU(N) anticodons (tRNA-Asp, -Asn, -His and -Tyr). Catalysis occurs through a double-displacement mechanism. The nucleophile active site attacks the C1' of nucleotide 34 to detach the guanine base from the RNA, forming a covalent enzyme-RNA intermediate. The proton acceptor active site deprotonates the incoming PreQ1, allowing a nucleophilic attack on the C1' of the ribose to form the product. After dissociation, two additional enzymatic reactions on the tRNA convert PreQ1 to queuine (Q), resulting in the hypermodified nucleoside queuosine (7-(((4,5-cis-dihydroxy-2-cyclopenten-1-yl)amino)methyl)-7-deazaguanosine). This is Queuine tRNA-ribosyltransferase from Campylobacter jejuni subsp. jejuni serotype O:23/36 (strain 81-176).